Here is a 162-residue protein sequence, read N- to C-terminus: UPF0178 protein Rsph17029_2512 (162 aa).

Belongs to the UPF0178 family.

The chain is UPF0178 protein Rsph17029_2512 from Cereibacter sphaeroides (strain ATCC 17029 / ATH 2.4.9) (Rhodobacter sphaeroides).